Reading from the N-terminus, the 248-residue chain is Pyridoxine 5'-phosphate synthase (248 aa).

Position 12 (N12) interacts with 3-amino-2-oxopropyl phosphate. 1-deoxy-D-xylulose 5-phosphate is bound at residue 14-15; that stretch reads DH. Residue R23 participates in 3-amino-2-oxopropyl phosphate binding. Residue H48 is the Proton acceptor of the active site. Residues R50 and H55 each coordinate 1-deoxy-D-xylulose 5-phosphate. The active-site Proton acceptor is the E75. A 1-deoxy-D-xylulose 5-phosphate-binding site is contributed by T105. The active-site Proton donor is H196. Residues G197 and 218–219 contribute to the 3-amino-2-oxopropyl phosphate site; that span reads GH.

It belongs to the PNP synthase family. In terms of assembly, homooctamer; tetramer of dimers.

The protein resides in the cytoplasm. It catalyses the reaction 3-amino-2-oxopropyl phosphate + 1-deoxy-D-xylulose 5-phosphate = pyridoxine 5'-phosphate + phosphate + 2 H2O + H(+). The protein operates within cofactor biosynthesis; pyridoxine 5'-phosphate biosynthesis; pyridoxine 5'-phosphate from D-erythrose 4-phosphate: step 5/5. Functionally, catalyzes the complicated ring closure reaction between the two acyclic compounds 1-deoxy-D-xylulose-5-phosphate (DXP) and 3-amino-2-oxopropyl phosphate (1-amino-acetone-3-phosphate or AAP) to form pyridoxine 5'-phosphate (PNP) and inorganic phosphate. The chain is Pyridoxine 5'-phosphate synthase from Ectopseudomonas mendocina (strain ymp) (Pseudomonas mendocina).